An 852-amino-acid polypeptide reads, in one-letter code: Bifunctional isopimaradiene synthase, chloroplastic (852 aa).

A chloroplast-targeting transit peptide spans 1 to 53 (HHLTANTQSIPHFSTTLNAGSSARKRRSLYLRWGKGSNKIIACVGEGATSVPY). Residue lysine 252 coordinates substrate. 2 residues coordinate Mg(2+): aspartate 385 and aspartate 387. The DXDD motif motif lies at 385-388 (DIDD). Residue lysine 472 coordinates substrate. The Mg(2+) site is built by aspartate 604, aspartate 608, asparagine 748, threonine 752, and glutamate 756. The DDXXD motif signature appears at 604–608 (DDLYD).

This sequence belongs to the terpene synthase family. Tpsd subfamily. Requires Mg(2+) as cofactor.

The protein localises to the plastid. It is found in the chloroplast. The enzyme catalyses (2E,6E,10E)-geranylgeranyl diphosphate = (+)-copalyl diphosphate. It carries out the reaction (+)-copalyl diphosphate = isopimara-7,15-diene + diphosphate. Its pathway is terpene metabolism; oleoresin biosynthesis. Functionally, involved in defensive oleoresin formation in conifers in response to insect attack or other injury. Involved in diterpene (C20) olefins biosynthesis. Bifunctional enzyme that catalyzes two sequential cyclizations of geranylgeranyl diphosphate (GGPP) to isopimara-7,15-diene. The sequence is that of Bifunctional isopimaradiene synthase, chloroplastic (TPS-ISO) from Abies balsamea (Balsam fir).